We begin with the raw amino-acid sequence, 141 residues long: Large ribosomal subunit protein uL11 (141 aa).

The protein belongs to the universal ribosomal protein uL11 family. In terms of assembly, part of the ribosomal stalk of the 50S ribosomal subunit. Interacts with L10 and the large rRNA to form the base of the stalk. L10 forms an elongated spine to which L12 dimers bind in a sequential fashion forming a multimeric L10(L12)X complex. Post-translationally, one or more lysine residues are methylated.

Its function is as follows. Forms part of the ribosomal stalk which helps the ribosome interact with GTP-bound translation factors. This is Large ribosomal subunit protein uL11 from Ruegeria pomeroyi (strain ATCC 700808 / DSM 15171 / DSS-3) (Silicibacter pomeroyi).